A 435-amino-acid polypeptide reads, in one-letter code: Cell adhesion molecule 2 (435 aa).

A signal peptide spans 1–24 (MIWKRSAVLRFYSVCGLLLQGSQG). Residues 25 to 367 (QFPLTQNVTV…SLAGQNGPDH (343 aa)) lie on the Extracellular side of the membrane. Residues 27 to 119 (PLTQNVTVVE…PVKTSKAYLT (93 aa)) enclose the Ig-like V-type domain. 2 N-linked (GlcNAc...) asparagine glycosylation sites follow: Asn31 and Asn51. 3 disulfide bridges follow: Cys44–Cys104, Cys146–Cys203, and Cys248–Cys296. 2 consecutive Ig-like C2-type domains span residues 127 to 219 (PQIS…VAMQ) and 227 to 312 (PSVK…YVLI). Asn291 is a glycosylation site (N-linked (GlcNAc...) asparagine). Over residues 337–351 (SVTITTSPSTSASSS) the composition is skewed to low complexity. The interval 337 to 360 (SVTITTSPSTSASSSSRRDPNSLA) is disordered. The helical transmembrane segment at 368-388 (ALIGGIVAVVVFVTLCSIFLL) threads the bilayer. Topologically, residues 389–435 (GRYLARHKGTYLTNEAKGAEDAPDADTAIINAEGSQVNAEEKKEYFI) are cytoplasmic. Position 423 is a phosphoserine (Ser423).

This sequence belongs to the nectin family. Glycosylation at Asn-51 reduces adhesive binding.

It localises to the cell membrane. The protein resides in the synapse. The protein localises to the cell projection. Its subcellular location is the axon. In terms of biological role, adhesion molecule that engages in homo- and heterophilic interactions with the other nectin-like family members, leading to cell aggregation. Important for synapse organization, providing regulated trans-synaptic adhesion. Preferentially binds to oligodendrocytes. This is Cell adhesion molecule 2 (Cadm2) from Mus musculus (Mouse).